The primary structure comprises 514 residues: Peptide chain release factor 3 (514 aa).

One can recognise a tr-type G domain in the interval 8-268 (KKRRTFAIIS…TFLEFAPEPH (261 aa)). GTP-binding positions include 17 to 24 (SHPDAGKT), 85 to 89 (DTPGH), and 139 to 142 (NKLD).

It belongs to the TRAFAC class translation factor GTPase superfamily. Classic translation factor GTPase family. PrfC subfamily.

It localises to the cytoplasm. Its function is as follows. Increases the formation of ribosomal termination complexes and stimulates activities of RF-1 and RF-2. It binds guanine nucleotides and has strong preference for UGA stop codons. It may interact directly with the ribosome. The stimulation of RF-1 and RF-2 is significantly reduced by GTP and GDP, but not by GMP. This chain is Peptide chain release factor 3, found in Streptococcus pyogenes serotype M5 (strain Manfredo).